The following is a 668-amino-acid chain: Probable 6-phosphofructo-2-kinase PB17E12.14c (668 aa).

The span at methionine 1–serine 14 shows a compositional bias: basic and acidic residues. 2 disordered regions span residues methionine 1–proline 105 and histidine 136–asparagine 185. Polar residues-rich tracts occupy residues asparagine 46–valine 56, serine 65–proline 86, and serine 164–threonine 184. Glycine 197 to serine 204 contacts ATP. Residues aspartate 281 and cysteine 312 contribute to the active site. Arginine 346 contributes to the beta-D-fructose 6-phosphate binding site. Glutamate 540 is a catalytic residue. The Proton donor role is filled by histidine 608.

It carries out the reaction beta-D-fructose 6-phosphate + ATP = beta-D-fructose 2,6-bisphosphate + ADP + H(+). In terms of biological role, synthesis of fructose 2,6-bisphosphate. The polypeptide is Probable 6-phosphofructo-2-kinase PB17E12.14c (Schizosaccharomyces pombe (strain 972 / ATCC 24843) (Fission yeast)).